The following is a 94-amino-acid chain: Co-chaperonin GroES (94 aa).

The protein belongs to the GroES chaperonin family. Heptamer of 7 subunits arranged in a ring. Interacts with the chaperonin GroEL.

Its subcellular location is the cytoplasm. Together with the chaperonin GroEL, plays an essential role in assisting protein folding. The GroEL-GroES system forms a nano-cage that allows encapsulation of the non-native substrate proteins and provides a physical environment optimized to promote and accelerate protein folding. GroES binds to the apical surface of the GroEL ring, thereby capping the opening of the GroEL channel. This is Co-chaperonin GroES from Lactiplantibacillus plantarum (strain ATCC BAA-793 / NCIMB 8826 / WCFS1) (Lactobacillus plantarum).